Here is a 197-residue protein sequence, read N- to C-terminus: Ras-related protein RabG2 (197 aa).

GTP is bound by residues 13–20 (GDSAVGKT), 61–65 (DTAGQ), and 119–122 (NKCD). The interval 175 to 197 (SKPSVVNPGSGGTSNTGGKKKFC) is disordered. A lipid anchor (S-geranylgeranyl cysteine) is attached at C197.

The protein belongs to the small GTPase superfamily. Rab family.

The protein localises to the cell membrane. The protein is Ras-related protein RabG2 (rabG2) of Dictyostelium discoideum (Social amoeba).